The chain runs to 371 residues: Carnitine monooxygenase oxygenase subunit (371 aa).

The 109-residue stretch at 44–152 folds into the Rieske domain; the sequence is WICVAHGSEL…VEEYAGFVFI (109 aa). [2Fe-2S] cluster contacts are provided by C86, H88, C106, and H109. Fe cation is bound by residues H208, H213, and D323.

The protein belongs to the bacterial ring-hydroxylating dioxygenase alpha subunit family. CntA subfamily. Composed of an oxygenase subunit and a reductase subunit. [2Fe-2S] cluster serves as cofactor. It depends on Fe cation as a cofactor.

It carries out the reaction (R)-carnitine + NADH + O2 + H(+) = (3R)-3-hydroxy-4-oxobutanoate + trimethylamine + NAD(+) + H2O. The catalysed reaction is (R)-carnitine + NADPH + O2 + H(+) = (3R)-3-hydroxy-4-oxobutanoate + trimethylamine + NADP(+) + H2O. The protein operates within amine and polyamine metabolism; carnitine metabolism. With respect to regulation, inhibited by EDTA. Its function is as follows. Converts carnitine to trimethylamine and malic semialdehyde. Acts on both enantiomers. The polypeptide is Carnitine monooxygenase oxygenase subunit (Acinetobacter pittii (strain PHEA-2)).